The following is a 497-amino-acid chain: 3-ketoacyl-CoA synthase 6 (497 aa).

The next 2 helical transmembrane spans lie at Leu25–Leu45 and Leu64–Ser84. The 290-residue stretch at Tyr81–Ile370 folds into the FAE domain. Active-site residues include Cys225, His304, His388, His392, His421, and Asn425.

Belongs to the thiolase-like superfamily. Chalcone/stilbene synthases family. In epidermal cells of aerial tissues and in the tapetum of anthers near maturity. Expressed in siliques, flowers and leaves.

The protein resides in the endoplasmic reticulum membrane. The catalysed reaction is a very-long-chain acyl-CoA + malonyl-CoA + H(+) = a very-long-chain 3-oxoacyl-CoA + CO2 + CoA. The protein operates within lipid metabolism; fatty acid biosynthesis. Strongly inhibited by metazachlor and mefluidide. Its function is as follows. Contributes to cuticular wax and suberin biosynthesis. Involved in both decarbonylation and acyl-reduction wax synthesis pathways. Required for elongation of C24 fatty acids, an essential step of the cuticular wax production. Major condensing enzyme for stem wax and pollen coat lipid biosynthesis. This chain is 3-ketoacyl-CoA synthase 6, found in Arabidopsis thaliana (Mouse-ear cress).